Here is a 305-residue protein sequence, read N- to C-terminus: Elongation factor Ts (305 aa).

An involved in Mg(2+) ion dislocation from EF-Tu region spans residues 79 to 82 (TDFV).

It belongs to the EF-Ts family.

The protein resides in the cytoplasm. Its function is as follows. Associates with the EF-Tu.GDP complex and induces the exchange of GDP to GTP. It remains bound to the aminoacyl-tRNA.EF-Tu.GTP complex up to the GTP hydrolysis stage on the ribosome. This Brucella suis biovar 1 (strain 1330) protein is Elongation factor Ts.